Here is a 378-residue protein sequence, read N- to C-terminus: Queuine tRNA-ribosyltransferase (378 aa).

The Proton acceptor role is filled by aspartate 89. Substrate is bound by residues 89–93 (DSGGF), aspartate 143, glutamine 187, and glycine 214. The interval 245 to 251 (GVGKPQD) is RNA binding. Aspartate 264 serves as the catalytic Nucleophile. The RNA binding; important for wobble base 34 recognition stretch occupies residues 269 to 273 (TRNAR). Residues cysteine 302, cysteine 304, cysteine 307, and histidine 334 each contribute to the Zn(2+) site.

Belongs to the queuine tRNA-ribosyltransferase family. Homodimer. Within each dimer, one monomer is responsible for RNA recognition and catalysis, while the other monomer binds to the replacement base PreQ1. Requires Zn(2+) as cofactor.

It catalyses the reaction 7-aminomethyl-7-carbaguanine + guanosine(34) in tRNA = 7-aminomethyl-7-carbaguanosine(34) in tRNA + guanine. Its pathway is tRNA modification; tRNA-queuosine biosynthesis. Its function is as follows. Catalyzes the base-exchange of a guanine (G) residue with the queuine precursor 7-aminomethyl-7-deazaguanine (PreQ1) at position 34 (anticodon wobble position) in tRNAs with GU(N) anticodons (tRNA-Asp, -Asn, -His and -Tyr). Catalysis occurs through a double-displacement mechanism. The nucleophile active site attacks the C1' of nucleotide 34 to detach the guanine base from the RNA, forming a covalent enzyme-RNA intermediate. The proton acceptor active site deprotonates the incoming PreQ1, allowing a nucleophilic attack on the C1' of the ribose to form the product. After dissociation, two additional enzymatic reactions on the tRNA convert PreQ1 to queuine (Q), resulting in the hypermodified nucleoside queuosine (7-(((4,5-cis-dihydroxy-2-cyclopenten-1-yl)amino)methyl)-7-deazaguanosine). This Blochmanniella floridana protein is Queuine tRNA-ribosyltransferase.